We begin with the raw amino-acid sequence, 119 residues long: Protein Wnt-4 (119 aa).

Ser-1 carries the O-palmitoleoyl serine; by PORCN lipid modification. 2 cysteine pairs are disulfide-bonded: Cys-69–Cys-100 and Cys-85–Cys-95. Residue Asn-86 is glycosylated (N-linked (GlcNAc...) asparagine).

Belongs to the Wnt family. Post-translationally, palmitoleoylation is required for efficient binding to frizzled receptors. Depalmitoleoylation leads to Wnt signaling pathway inhibition.

It is found in the secreted. The protein resides in the extracellular space. The protein localises to the extracellular matrix. Functionally, ligand for members of the frizzled family of seven transmembrane receptors. Plays an important role in embryonic development. This chain is Protein Wnt-4 (WNT4), found in Meleagris gallopavo (Wild turkey).